A 111-amino-acid chain; its full sequence is Probable 4-amino-4-deoxy-L-arabinose-phosphoundecaprenol flippase subunit ArnE (111 aa).

3 consecutive transmembrane segments (helical) span residues 38 to 58 (LWLGLALICMGAAMVLWLLVL), 61 to 81 (LPVGIAYPMLSLNFVWVTLAA), and 91 to 111 (PRHWLGVALIISGIIILGSAA). The EamA domain maps to 40–109 (LGLALICMGA…IISGIIILGS (70 aa)).

It belongs to the ArnE family. As to quaternary structure, heterodimer of ArnE and ArnF.

The protein resides in the cell inner membrane. It participates in bacterial outer membrane biogenesis; lipopolysaccharide biosynthesis. Its function is as follows. Translocates 4-amino-4-deoxy-L-arabinose-phosphoundecaprenol (alpha-L-Ara4N-phosphoundecaprenol) from the cytoplasmic to the periplasmic side of the inner membrane. This chain is Probable 4-amino-4-deoxy-L-arabinose-phosphoundecaprenol flippase subunit ArnE, found in Salmonella paratyphi B (strain ATCC BAA-1250 / SPB7).